A 453-amino-acid chain; its full sequence is MTKFSEPIRDSHVAVLAFFPVGAHAGPLLAVTRRLAAASPSTIFSFFNTARSNASLFSSDHPENIKVHDVSDGVPEGTMLGNPLEMVELFLEAAPRIFRSEIAAAEIEVGKKVTCMLTDAFFWFAADIAAELNATWVAFWAGGANSLCAHLYTDLIRETIGLKDVSMEETLGFIPGMENYRVKDIPEEVVFEDLDSVFPKALYQMSLALPRASAVFISSFEELEPTLNYNLRSKLKRFLNIAPLTLLSSTSEKEMRDPHGCFAWMGKRSAASVAYISFGTVMEPPPEELVAIAQGLESSKVPFVWSLKEKNMVHLPKGFLDRTREQGIVVPWAPQVELLKHEAMGVNVTHCGWNSVLESVSAGVPMIGRPILADNRLNGRAVEVVWKVGVMMDNGVFTKEGFEKCLNDVFVHDDGKTMKANAKKLKEKLQEDFSMKGSSLENFKILLDEIVKV.

Residue H24 is the Proton acceptor of the active site. An an anthocyanidin-binding site is contributed by H24. D119 functions as the Charge relay in the catalytic mechanism. An an anthocyanidin-binding site is contributed by H150. The UDP-beta-L-rhamnose site is built by T280, A333, H350, N354, S355, and E358. A373 lines the an anthocyanidin pocket.

It belongs to the UDP-glycosyltransferase family. In terms of tissue distribution, expressed in leaves, flowers, siliques, and stems. Expressed in the shoot apex.

It catalyses the reaction kaempferol + UDP-beta-L-rhamnose = kaempferol 3-O-alpha-L-rhamnoside + UDP + H(+). It carries out the reaction UDP-beta-L-rhamnose + quercetin = quercitrin + UDP + H(+). Its pathway is flavonoid metabolism. Flavonol 3-O-rhamnosyltransferase that catalyzes the transfer of rhamnose from UDP-rhamnose to the 3-OH position of kaempferol and quercetin. Possesses low quercetin 3-O-glucosyltransferase activity in vitro. This Arabidopsis thaliana (Mouse-ear cress) protein is Flavonol-3-O-rhamnosyltransferase.